The sequence spans 63 residues: Large ribosomal subunit protein bL35 (63 aa).

Basic residues-rich tracts occupy residues 1–25 (MPKMKSKSSAAKRFKKTANGFKHRQ) and 32–47 (LTKKSTKRKRHLRPKK). Residues 1-55 (MPKMKSKSSAAKRFKKTANGFKHRQSFTSHILTKKSTKRKRHLRPKKQVNPSDVP) form a disordered region.

Belongs to the bacterial ribosomal protein bL35 family.

The protein is Large ribosomal subunit protein bL35 of Hahella chejuensis (strain KCTC 2396).